We begin with the raw amino-acid sequence, 198 residues long: Segregation and condensation protein B (198 aa).

A disordered region spans residues 168 to 198 (KLADPATDEPDQNEMDLFFDRFNQSKEQEEE).

The protein belongs to the ScpB family. As to quaternary structure, homodimer. Homodimerization may be required to stabilize the binding of ScpA to the Smc head domains. Component of a cohesin-like complex composed of ScpA, ScpB and the Smc homodimer, in which ScpA and ScpB bind to the head domain of Smc. The presence of the three proteins is required for the association of the complex with DNA.

Its subcellular location is the cytoplasm. Participates in chromosomal partition during cell division. May act via the formation of a condensin-like complex containing Smc and ScpA that pull DNA away from mid-cell into both cell halves. The polypeptide is Segregation and condensation protein B (Listeria monocytogenes serotype 4b (strain CLIP80459)).